The following is an 899-amino-acid chain: Ewing's tumor-associated antigen 1 homolog (899 aa).

Residues 1-82 are disordered; it reads MSRRRKHGDS…TEERYETPKR (82 aa). The segment covering 71 to 81 has biased composition (basic and acidic residues); it reads SNTEERYETPK. An ATR-activation domain (AAD) motif is present at residues 105-111; sequence IFWDQNS. Residues 180–210 adopt a coiled-coil conformation; sequence TKLKSQNQEEELMKLAKQFDKNMEELDVIQE. Residues Lys416 and Lys444 each participate in a glycyl lysine isopeptide (Lys-Gly) (interchain with G-Cter in SUMO2) cross-link. Residue Ser467 is modified to Phosphoserine. Residues Lys485 and Lys539 each participate in a glycyl lysine isopeptide (Lys-Gly) (interchain with G-Cter in SUMO2) cross-link. An RBM1 motif motif is present at residues 607-622; that stretch reads DDVDDDILYQACDDIE. Position 810 is a phosphoserine (Ser810). Residues 833-899 form a disordered region; the sequence is NKTVNPLPGK…AQASSVKKGR (67 aa). A compositionally biased stretch (basic and acidic residues) spans 859–877; it reads PSKEEEEKNRKCSPEEIQR. The short motif at 868–890 is the RBM2 motif element; the sequence is RKCSPEEIQRKRQAALIRRMAKA.

As to quaternary structure, interacts (via RBM1 motif) with RPA1. Interacts (via RBM2 motif) with RPA2. Interacts (via the ATR-activation domain motif) with ATR. Post-translationally, phosphorylated by ATR.

Its subcellular location is the nucleus. Replication stress response protein that accumulates at DNA damage sites and promotes replication fork progression and integrity. Recruited to stalled replication forks via interaction with the RPA complex and directly stimulates ATR kinase activity independently of TOPBP1. Probably only regulates a subset of ATR targets. This is Ewing's tumor-associated antigen 1 homolog from Bos taurus (Bovine).